The chain runs to 439 residues: Enolase 1 (439 aa).

Substrate-binding residues include histidine 160 and glutamate 169. Glutamate 212 acts as the Proton donor in catalysis. Residues aspartate 247, glutamate 296, and aspartate 323 each contribute to the Mg(2+) site. 2 residues coordinate substrate: glutamate 296 and aspartate 323. Catalysis depends on lysine 348, which acts as the Proton acceptor. Substrate is bound by residues serine 375–serine 378 and lysine 399.

It belongs to the enolase family. As to quaternary structure, homodimer. Mg(2+) is required as a cofactor.

The protein localises to the cytoplasm. The catalysed reaction is (2R)-2-phosphoglycerate = phosphoenolpyruvate + H2O. It functions in the pathway carbohydrate degradation; glycolysis; pyruvate from D-glyceraldehyde 3-phosphate: step 4/5. This is Enolase 1 (ENO1) from Debaryomyces hansenii (strain ATCC 36239 / CBS 767 / BCRC 21394 / JCM 1990 / NBRC 0083 / IGC 2968) (Yeast).